The following is a 730-amino-acid chain: MSEVSRDENMRGTSDGIGSQAQFLESELDTEFVVETFIEAIKDDDLKVVKEVVESGAIDINKDCIDELPGLHWACIKNRFSIAKFLIRRGANVNQTAGPERATALHWAARYGHVYIVDLLLKHGANPTLIDGQGLNILHFSVYSSNIMLVVYVLYFVVSNNNNVDIDSRDYNNRTPLLWAAYQGDFLTVELLLKFGATVALTDNRGFNALHCALVGGDQRAICDLILSGANFYERNNQKQDCFDLAKGMGTKALFEQALQHHGYDKLGNQKDKIFKKNSHSQLMIFLSPFALMIYTYLISLILSPPLAIALSLLVIVVTVNSLKKFVLPSLTRKNIYKVSLVRTPFFSGLFMSTFSFLLFIWVKKLYPYSVFDYTAKDAQLLITSLFTFVLFLKLVRSDPGCLKMDDSTTPVRETINQLIQIGKYDRNNFCVETLERKPLRSKYSLFSGALVARFNHYCPWVYNDIGLKNHKLFMFFAFSVQYEMFLFMWLCLEYFKKTNHIYEQVEEYAKCTFLKNETLCKGSNYDPSTFFLFIWISMNFVWLGGMLIVQCFQIFKGITSPELYALIKEERKAEALNLIPFENPIFSIPNGKNRDTVPEDPNATTVTHTISIDSLEPRNRRHAILDACFSMVGLNQWVVTFKEMLGISNLLRGNSQPRHNHSLLRNFLVANHWKTNLTDFWLNSDVTAPLWQRFFYSSDTSKAMLGGVEVDYYQLYELPAREGEPISSN.

ANK repeat units follow at residues 32–62 (FVVE…DINK), 66–95 (DELP…NVNQ), 100–129 (ERAT…NPTL), 133–166 (QGLN…NVDI), 172–201 (NNRT…TVAL), and 205–234 (RGFN…NFYE). 4 consecutive transmembrane segments (helical) span residues 283-303 (LMIF…SLIL), 309-328 (IALS…KFVL), 344-364 (TPFF…IWVK), and 376-396 (AKDA…LKLV). One can recognise a DHHC domain in the interval 429–479 (NFCVETLERKPLRSKYSLFSGALVARFNHYCPWVYNDIGLKNHKLFMFFAF). Residue C459 is the S-palmitoyl cysteine intermediate of the active site. The next 2 helical transmembrane spans lie at 473-493 (LFMF…WLCL) and 530-550 (TFFL…MLIV).

This sequence belongs to the DHHC palmitoyltransferase family. AKR/ZDHHC17 subfamily.

Its subcellular location is the membrane. The enzyme catalyses L-cysteinyl-[protein] + hexadecanoyl-CoA = S-hexadecanoyl-L-cysteinyl-[protein] + CoA. This Saccharomyces uvarum (strain ATCC 76518 / CBS 7001 / CLIB 283 / NBRC 10550 / MCYC 623 / NCYC 2669 / NRRL Y-11845) (Yeast) protein is Probable palmitoyltransferase AKR2 (AKR2).